Reading from the N-terminus, the 459-residue chain is Cysteine--tRNA ligase (459 aa).

Cysteine 29 contributes to the Zn(2+) binding site. The 'HIGH' region signature appears at 31–41 (VTTYDYCHIGH). Zn(2+) contacts are provided by cysteine 210, histidine 235, and glutamate 239. Residues 267 to 271 (KMSKS) carry the 'KMSKS' region motif. Residue lysine 270 coordinates ATP.

Belongs to the class-I aminoacyl-tRNA synthetase family. Monomer. The cofactor is Zn(2+).

It is found in the cytoplasm. It catalyses the reaction tRNA(Cys) + L-cysteine + ATP = L-cysteinyl-tRNA(Cys) + AMP + diphosphate. This chain is Cysteine--tRNA ligase, found in Idiomarina loihiensis (strain ATCC BAA-735 / DSM 15497 / L2-TR).